Consider the following 309-residue polypeptide: Short chain dehydrogenase MYCFIDRAFT_6125 (309 aa).

Residues Ile43, Arg67, Asp88, and Arg150 each contribute to the NADP(+) site. Ser168 (proton donor) is an active-site residue. Positions 182, 186, 215, and 217 each coordinate NADP(+). Catalysis depends on Tyr182, which acts as the Proton acceptor. Lys186 (lowers pKa of active site Tyr) is an active-site residue.

Belongs to the short-chain dehydrogenases/reductases (SDR) family.

It participates in secondary metabolite biosynthesis. Its function is as follows. Short chain dehydrogenase; part of the gene cluster that mediates the biosynthesis of an emodin derivative that may be involved in black Sigatoka disease of banana. The pathway begins with the synthesis of atrochrysone thioester by the polyketide synthase PKS8-1. The atrochrysone carboxyl ACP thioesterase MYCFIDRAFT_190111 then breaks the thioester bond and releases the atrochrysone carboxylic acid from PKS8-1. The decarboxylase MYCFIDRAFT_34057 then catalyzes the concerted decarboxylation-elimination required to convert atochrysone carboxylic acid into emodin anthrone, which is further oxidized to emodin by the anthrone oxygenase MYCFIDRAFT_34418. The functions of the other tailoring enzymes as well as the final product of the cluster have still to be identified. The sequence is that of Short chain dehydrogenase MYCFIDRAFT_6125 from Pseudocercospora fijiensis (strain CIRAD86) (Black leaf streak disease fungus).